The chain runs to 219 residues: Casparian strip membrane protein 3 (219 aa).

Residues 1-43 (MDPGREDEVPLAATSPESRRTRSNGRGKATVGDAPPPAETVVS) are disordered. Residues 1 to 57 (MDPGREDEVPLAATSPESRRTRSNGRGKATVGDAPPPAETVVSTKAAPLPTGGWKKG) are Cytoplasmic-facing. The helical transmembrane segment at 58–78 (IAILDFILRLGAIGAAMGASI) threads the bilayer. The Extracellular portion of the chain corresponds to 79–108 (LMGTNEQILPFFTQFLQFHAQWDDFPVFKL). The chain crosses the membrane as a helical span at residues 109–129 (FVVLNALAGGFLILSLPLSIV). The Cytoplasmic segment spans residues 130–147 (CIVRPLAVGPRFLLLITD). The helical transmembrane segment at 148 to 168 (LVNMATVIAAASAAAAIVYVA) threads the bilayer. Residues 169–193 (HNGSQDANWIAICQQFTDFCQGTSE) lie on the Extracellular side of the membrane. Asn170 carries N-linked (GlcNAc...) asparagine glycosylation. Residues 194-214 (AVVVSFVAAVFLVCLIVVSTL) traverse the membrane as a helical segment. The Cytoplasmic segment spans residues 215 to 219 (ALKRT).

The protein belongs to the Casparian strip membrane proteins (CASP) family. Homodimer and heterodimers.

The protein localises to the cell membrane. Regulates membrane-cell wall junctions and localized cell wall deposition. Required for establishment of the Casparian strip membrane domain (CSD) and the subsequent formation of Casparian strips, a cell wall modification of the root endodermis that determines an apoplastic barrier between the intraorganismal apoplasm and the extraorganismal apoplasm and prevents lateral diffusion. The chain is Casparian strip membrane protein 3 from Lotus japonicus (Lotus corniculatus var. japonicus).